The following is a 147-amino-acid chain: MVEWTDFERATIKDVFSKIEYEVVGPAALARCLVVYPWTQRYFGNFGNLYNAAAITGNPKVAKHGITILHGLDKAVKNMDDIRNTYAELSVLHSEKLHVDPDNFKLLADCLTIVVAAQMGKAFTGEIQAAFQKFLAVVVSSLGRQYH.

The Globin domain maps to 3–147 (EWTDFERATI…VVSSLGRQYH (145 aa)). Residues His64 and His93 each coordinate heme b.

This sequence belongs to the globin family. In terms of assembly, hb 1 is a heterotetramer of two alpha-1 and two beta chains. Hb 2 is a heterotetramer of two alpha-2 and two beta chains. Red blood cells.

Its function is as follows. Involved in oxygen transport from gills to the various peripheral tissues. This is Hemoglobin subunit beta (hbb) from Cottoperca gobio (Frogmouth).